Consider the following 145-residue polypeptide: Large ribosomal subunit protein uL13 (145 aa).

The protein belongs to the universal ribosomal protein uL13 family. Part of the 50S ribosomal subunit.

Functionally, this protein is one of the early assembly proteins of the 50S ribosomal subunit, although it is not seen to bind rRNA by itself. It is important during the early stages of 50S assembly. This is Large ribosomal subunit protein uL13 from Listeria monocytogenes serotype 4b (strain CLIP80459).